A 553-amino-acid polypeptide reads, in one-letter code: Cytokine-like nuclear factor N-PAC (553 aa).

Residues 8-66 (LGDLVWGKLGRYPPWPGKIVNPPKDLKKPRGKKCFFVKFFGTEDHAWIKVEQLKPYHAH) form the PWWP domain. 2 stretches are compositionally biased toward basic and acidic residues: residues 92–145 (RAKG…EGKK) and 162–182 (RAQEQSPRKRGRPPKDEKDLT). The interval 92-188 (RAKGKDQTSS…KDLTIPESST (97 aa)) is disordered. A Phosphoserine modification is found at serine 130. Lysine 135 participates in a covalent cross-link: Glycyl lysine isopeptide (Lys-Gly) (interchain with G-Cter in SUMO2). Serine 167 is modified (phosphoserine). The segment at residues 168-180 (PRKRGRPPKDEKD) is a DNA-binding region (a.T hook). Glycyl lysine isopeptide (Lys-Gly) (interchain with G-Cter in SUMO2) cross-links involve residues lysine 176, lysine 179, lysine 201, and lysine 211. The interaction with histone H3 stretch occupies residues 214 to 217 (DPHF). The segment at 216-225 (HFHHFLLSQT) is interaction with KDM1B. Residues lysine 227, lysine 237, lysine 240, and lysine 269 each participate in a glycyl lysine isopeptide (Lys-Gly) (interchain with G-Cter in SUMO2) cross-link. The segment at 261-553 (GSITPTDKKI…MSAVYRAYIH (293 aa)) is dehydrogenase domain. 271–285 (GFLGLGLMGSGIVSN) is a binding site for NAD(+). A Glycyl lysine isopeptide (Lys-Gly) (interchain with G-Cter in SUMO2) cross-link involves residue lysine 302. NAD(+) is bound by residues threonine 362 and lysine 505. Phosphoserine is present on serine 540.

This sequence belongs to the HIBADH-related family. NP60 subfamily. As to quaternary structure, homotetramere. Interacts with MAPK14. Interacts with KDM1B at nucleosomes; this interaction stimulates H3K4me1 and H3K4me2 demethylation. Binds to mononucleosomes. Interacts with GATA4; the interaction is required for a synergistic activation of GATA4 target genes transcription.

It is found in the nucleus. It localises to the chromosome. Cytokine-like nuclear factor with chromatin gene reader activity involved in chromatin modification and regulation of gene expression. Acts as a nucleosome-destabilizing factor that is recruited to genes during transcriptional activation. Recognizes and binds histone H3 without a preference for specific epigenetic markers and also binds DNA. Interacts with KDM1B and promotes its histone demethylase activity by facilitating the capture of H3 tails, they form a multifunctional enzyme complex that modifies transcribed chromatin and facilitates Pol II transcription through nucleosomes. Stimulates the acetylation of 'Lys-56' of nucleosomal histone H3 (H3K56ac) by EP300. With GATA4, co-binds a defined set of heart development genes and coregulates their expression during cardiomyocyte differentiation. Regulates p38 MAP kinase activity by mediating stress activation of MAPK14/p38alpha and specifically regulating MAPK14 signaling. Indirectly promotes phosphorylation of MAPK14 and activation of ATF2. The phosphorylation of MAPK14 requires upstream activity of MAP2K4 and MAP2K6. The protein is Cytokine-like nuclear factor N-PAC (GLYR1) of Pongo abelii (Sumatran orangutan).